The primary structure comprises 112 residues: Putative iron-sulfur cluster insertion protein ErpA (112 aa).

Residues Cys40, Cys104, and Cys106 each coordinate iron-sulfur cluster.

The protein belongs to the HesB/IscA family. As to quaternary structure, homodimer. Requires iron-sulfur cluster as cofactor.

Its function is as follows. Required for insertion of 4Fe-4S clusters. This chain is Putative iron-sulfur cluster insertion protein ErpA, found in Neisseria gonorrhoeae (strain ATCC 700825 / FA 1090).